Consider the following 119-residue polypeptide: uncharacterized protein (119 aa).

An N-terminal signal peptide occupies residues 1–26 (MNKLKRLSMLTVMIASVFIFSSHALA). The SH3b domain maps to 30-104 (YTVSTSSGAP…IVPGFVSDTY (75 aa)).

This sequence to B.subtilis YraJ.

This is an uncharacterized protein from Bacillus subtilis (strain 168).